We begin with the raw amino-acid sequence, 558 residues long: Zinc finger protein piragua (558 aa).

One can recognise a ZAD domain in the interval Ser15 to Gln94. The Zn(2+) site is built by Cys17, Cys20, Cys67, and Cys70. Residues Leu132–Asp177 are compositionally biased toward acidic residues. The segment at Leu132–Met178 is disordered. 9 consecutive C2H2-type zinc fingers follow at residues Phe208–His231, Tyr237–His260, Tyr266–His288, Phe294–His316, Phe322–His344, Phe350–His372, Tyr414–His436, Phe441–His464, and Phe468–His490.

Its function is as follows. May be involved in transcriptional regulation. The function of this protein is unclear. According to one report, it is required for development and viability since mutants display defects in several developmental morphogenetic processes including dorsal closure and head involution, and die by the first instar larval stage. It may also be involved in fwe-mediated cellular competition. However, according to another report, it is not required for development or viability since mutants have no visible phenotype and are fertile. This Drosophila melanogaster (Fruit fly) protein is Zinc finger protein piragua.